The sequence spans 306 residues: Ornithine carbamoyltransferase (306 aa).

Carbamoyl phosphate contacts are provided by residues 46 to 49 (STRT), Q73, R97, and 124 to 127 (HPTQ). L-ornithine-binding positions include N156, D220, and 224 to 225 (SM). Residues 260-261 (CL) and R288 contribute to the carbamoyl phosphate site.

It belongs to the aspartate/ornithine carbamoyltransferase superfamily. OTCase family.

Its subcellular location is the cytoplasm. It catalyses the reaction carbamoyl phosphate + L-ornithine = L-citrulline + phosphate + H(+). Its pathway is amino-acid biosynthesis; L-arginine biosynthesis; L-arginine from L-ornithine and carbamoyl phosphate: step 1/3. In terms of biological role, reversibly catalyzes the transfer of the carbamoyl group from carbamoyl phosphate (CP) to the N(epsilon) atom of ornithine (ORN) to produce L-citrulline. This chain is Ornithine carbamoyltransferase, found in Campylobacter jejuni (strain RM1221).